We begin with the raw amino-acid sequence, 336 residues long: MVVKVGINGFGRIGRLAFRRIQNIEGVEVTRINDLTDPNMLAHLLKYDTTQGRFDGTVEVKEGGFEVNGNFIKVSAERDPENIDWATDGVEIVLEATGFFAKKEAAEKHLHTNGAKKVVITAPGGNDVKTVVFNTNHDILDGTETVISGASCTTNCLAPMAKALHDAFGIQKGLMTTIHAYTGDQMILDGPHRGGDLRRARAGAANIVPNSTGAAKAIGLVIPELNGKLDGAAQRVPVPTGSVTELVVTLDKNVSVDEINAAMKAASNDSFGYTEDPIVSSDIVGVSYGSLFDATQTKVMEVDGSQLVKVVSWYDNEMSYTAQLVRTLEYFAKIAK.

Residues 12–13, D34, R78, and T121 contribute to the NAD(+) site; that span reads RI. D-glyceraldehyde 3-phosphate contacts are provided by residues 151–153, T182, R199, 212–213, and R235; these read SCT and TG. C152 serves as the catalytic Nucleophile. N316 contacts NAD(+).

The protein belongs to the glyceraldehyde-3-phosphate dehydrogenase family. Homotetramer.

Its subcellular location is the cytoplasm. It carries out the reaction D-glyceraldehyde 3-phosphate + phosphate + NAD(+) = (2R)-3-phospho-glyceroyl phosphate + NADH + H(+). Its pathway is carbohydrate degradation; glycolysis; pyruvate from D-glyceraldehyde 3-phosphate: step 1/5. Its function is as follows. Catalyzes the oxidative phosphorylation of glyceraldehyde 3-phosphate (G3P) to 1,3-bisphosphoglycerate (BPG) using the cofactor NAD. The first reaction step involves the formation of a hemiacetal intermediate between G3P and a cysteine residue, and this hemiacetal intermediate is then oxidized to a thioester, with concomitant reduction of NAD to NADH. The reduced NADH is then exchanged with the second NAD, and the thioester is attacked by a nucleophilic inorganic phosphate to produce BPG. The polypeptide is Glyceraldehyde-3-phosphate dehydrogenase (gap) (Streptococcus pyogenes serotype M3 (strain ATCC BAA-595 / MGAS315)).